Here is a 313-residue protein sequence, read N- to C-terminus: tRNA dimethylallyltransferase 2 (313 aa).

16–23 (GPTASGKT) is an ATP binding site. 18-23 (TASGKT) serves as a coordination point for substrate. Interaction with substrate tRNA regions lie at residues 41 to 44 (DSRQ) and 161 to 165 (QRTIR).

Belongs to the IPP transferase family. Monomer. Requires Mg(2+) as cofactor.

It catalyses the reaction adenosine(37) in tRNA + dimethylallyl diphosphate = N(6)-dimethylallyladenosine(37) in tRNA + diphosphate. Its function is as follows. Catalyzes the transfer of a dimethylallyl group onto the adenine at position 37 in tRNAs that read codons beginning with uridine, leading to the formation of N6-(dimethylallyl)adenosine (i(6)A). This is tRNA dimethylallyltransferase 2 from Pelobacter propionicus (strain DSM 2379 / NBRC 103807 / OttBd1).